Reading from the N-terminus, the 22-residue chain is Conotoxin MIIIJ (22 aa).

A Pyrrolidone carboxylic acid modification is found at Q1. Intrachain disulfides connect C3–C21, C4–C19, and C9–C22.

It belongs to the conotoxin M superfamily. In terms of tissue distribution, expressed by the venom duct.

Its subcellular location is the secreted. Probable competitive antagonist of fish muscle acetylcholine receptor. Inhibits postsynaptic nicotinic acetylcholine receptors (nAChRs) from fish (zebrafish and goldfish) and frogs (IC(50)=0.1 uM). Protects these receptors from block by alpha-bungarotoxin and alpha-conotoxin EI. Does not block nAChRs at the neuromuscular junction of Rana pipiens. Shows a weak inhibition on mammalian adult and fetal muscle nAChRs (alpha-1-beta-1-delta-epsilon/CHRNA1-CHRNB1-CHRND-CHRNE and alpha-1 beta-1 gamma delta/CHRNA1-CHRNB1-CHRNG-CHRND) (IC(50)=3-45 uM). In vivo, induces paralysis in goldfish (Carassius auratus) but not mice. The polypeptide is Conotoxin MIIIJ (Conus magus (Magical cone)).